Here is a 64-residue protein sequence, read N- to C-terminus: MPKAKTHSGASKRFRRTGTGKIVRQKTNRRHLLEHKPTTRTRRLEGRTTVSANDTKRVNSLLNG.

2 disordered regions span residues 1–22 (MPKA…TGKI) and 34–64 (EHKP…LLNG). Residues 34–46 (EHKPTTRTRRLEG) are compositionally biased toward basic and acidic residues. Residues 50-64 (VSANDTKRVNSLLNG) are compositionally biased toward polar residues.

This sequence belongs to the bacterial ribosomal protein bL35 family.

The protein is Large ribosomal subunit protein bL35 of Mycolicibacterium paratuberculosis (strain ATCC BAA-968 / K-10) (Mycobacterium paratuberculosis).